We begin with the raw amino-acid sequence, 329 residues long: Cytochrome f (329 aa).

The first 44 residues, 1-44 (MKRNIIFLVIHQFENLTMKKKQNIFFIFLLTVFFNFTVNSNVSA), serve as a signal peptide directing secretion. Residues Tyr45, Cys65, Cys68, and His69 each coordinate heme. A helical membrane pass occupies residues 295 to 315 (VQGLIIFLITIFITQLFLVLK).

Belongs to the cytochrome f family. The 4 large subunits of the cytochrome b6-f complex are cytochrome b6, subunit IV (17 kDa polypeptide, petD), cytochrome f and the Rieske protein, while the 4 small subunits are PetG, PetL, PetM and PetN. The complex functions as a dimer. Heme serves as cofactor.

Its subcellular location is the plastid. It is found in the chloroplast thylakoid membrane. Functionally, component of the cytochrome b6-f complex, which mediates electron transfer between photosystem II (PSII) and photosystem I (PSI), cyclic electron flow around PSI, and state transitions. This is Cytochrome f from Tupiella akineta (Green alga).